Consider the following 320-residue polypeptide: Heterogeneous nuclear ribonucleoprotein A1-like 2 (320 aa).

Positions 4–94 are globular A domain; the sequence is SASPKEPEQL…EPKRAVSRED (91 aa). Phosphoserine occurs at positions 6 and 22. RRM domains lie at 14–97 and 105–184; these read RKLF…DSQR and KKIF…LPKQ. A globular B domain region spans residues 95–185; sequence SQRPGAHLTV…EVRKALPKQE (91 aa). A disordered region spans residues 181-216; it reads LPKQEMASASSSQRGRRGSGNFGGGRGDGFGGNDNF. Asymmetric dimethylarginine; alternate occurs at positions 194, 206, 218, and 225. Omega-N-methylarginine; alternate occurs at positions 194, 206, 218, and 225. Residues 198–216 are compositionally biased toward gly residues; sequence GSGNFGGGRGDGFGGNDNF. Residues 218-240 are RNA-binding RGG-box; it reads RGGNFSGRGGFGGSCGGGGYGGS. Positions 268-305 are nuclear targeting sequence; it reads NQSSNFGPMKGGNFGGRSSGPYGGGGQYFAKPQNQGGY. A disordered region spans residues 271–320; sequence SNFGPMKGGNFGGRSSGPYGGGGQYFAKPQNQGGYGVSSSSSSYGSGRRF. A compositionally biased stretch (gly residues) spans 276 to 294; sequence MKGGNFGGRSSGPYGGGGQ. Arg284 carries the omega-N-methylarginine modification. Lys298 carries the post-translational modification N6-acetyllysine. Over residues 307 to 320 the composition is skewed to low complexity; it reads VSSSSSSYGSGRRF.

The protein localises to the nucleus. Its subcellular location is the cytoplasm. In terms of biological role, involved in the packaging of pre-mRNA into hnRNP particles, transport of poly(A) mRNA from the nucleus to the cytoplasm and may modulate splice site selection. This is Heterogeneous nuclear ribonucleoprotein A1-like 2 (HNRNPA1L2) from Homo sapiens (Human).